Reading from the N-terminus, the 344-residue chain is GTP 3',8-cyclase (344 aa).

In terms of domain architecture, Radical SAM core spans proline 19–alanine 245. Position 28 (arginine 28) interacts with GTP. [4Fe-4S] cluster is bound by residues cysteine 35 and cysteine 39. Position 41 (tyrosine 41) interacts with S-adenosyl-L-methionine. Cysteine 42 contributes to the [4Fe-4S] cluster binding site. Arginine 77 contributes to the GTP binding site. S-adenosyl-L-methionine is bound at residue glycine 81. Threonine 111 contributes to the GTP binding site. Residue serine 135 coordinates S-adenosyl-L-methionine. A GTP-binding site is contributed by lysine 171. Residue methionine 205 coordinates S-adenosyl-L-methionine. Residues cysteine 268 and cysteine 271 each coordinate [4Fe-4S] cluster. Residue arginine 273 to arginine 275 participates in GTP binding. [4Fe-4S] cluster is bound at residue cysteine 285.

This sequence belongs to the radical SAM superfamily. MoaA family. As to quaternary structure, monomer and homodimer. Requires [4Fe-4S] cluster as cofactor.

It catalyses the reaction GTP + AH2 + S-adenosyl-L-methionine = (8S)-3',8-cyclo-7,8-dihydroguanosine 5'-triphosphate + 5'-deoxyadenosine + L-methionine + A + H(+). It participates in cofactor biosynthesis; molybdopterin biosynthesis. In terms of biological role, catalyzes the cyclization of GTP to (8S)-3',8-cyclo-7,8-dihydroguanosine 5'-triphosphate. In Brucella ovis (strain ATCC 25840 / 63/290 / NCTC 10512), this protein is GTP 3',8-cyclase.